The following is a 193-amino-acid chain: Ion-translocating oxidoreductase complex subunit A (193 aa).

6 helical membrane-spanning segments follow: residues 5–25 (LLLL…FLGL), 39–59 (IGMG…AYLV), 67–87 (LGIE…VVQF), 102–122 (LLGI…VALL), 134–154 (IIYG…FASM), and 171–191 (SIAM…TGLV).

The protein belongs to the NqrDE/RnfAE family. As to quaternary structure, the complex is composed of six subunits: RnfA, RnfB, RnfC, RnfD, RnfE and RnfG.

Its subcellular location is the cell inner membrane. Functionally, part of a membrane-bound complex that couples electron transfer with translocation of ions across the membrane. The chain is Ion-translocating oxidoreductase complex subunit A from Vibrio cholerae serotype O1 (strain ATCC 39315 / El Tor Inaba N16961).